We begin with the raw amino-acid sequence, 330 residues long: Beta-hexosaminidase (330 aa).

Residues D62, R70, R130, and 160–161 (KH) each bind substrate. H173 acts as the Proton donor/acceptor in catalysis. The Nucleophile role is filled by D242.

It belongs to the glycosyl hydrolase 3 family. NagZ subfamily. Monomer.

The protein resides in the cytoplasm. The catalysed reaction is Hydrolysis of terminal non-reducing N-acetyl-D-hexosamine residues in N-acetyl-beta-D-hexosaminides.. It participates in cell wall biogenesis; peptidoglycan recycling. Its function is as follows. Plays a role in peptidoglycan recycling by cleaving the terminal beta-1,4-linked N-acetylglucosamine (GlcNAc) from peptide-linked peptidoglycan fragments, giving rise to free GlcNAc, anhydro-N-acetylmuramic acid and anhydro-N-acetylmuramic acid-linked peptides. Plays a role in beta-lactam antibiotic resistance via its role in generating anhydro-N-acetylmuramic acid-linked peptides; these peptides function as signaling molecules that induce high-level expression of the beta-lactamase AmpC. The protein is Beta-hexosaminidase of Vibrio cholerae serotype O1 (strain ATCC 39315 / El Tor Inaba N16961).